We begin with the raw amino-acid sequence, 178 residues long: Small ribosomal subunit protein uS5 (178 aa).

Residues 15-78 enclose the S5 DRBM domain; sequence FEEKIIEIRR…SAAKRNIVEV (64 aa).

This sequence belongs to the universal ribosomal protein uS5 family. In terms of assembly, part of the 30S ribosomal subunit. Contacts proteins S4 and S8.

In terms of biological role, with S4 and S12 plays an important role in translational accuracy. Located at the back of the 30S subunit body where it stabilizes the conformation of the head with respect to the body. The polypeptide is Small ribosomal subunit protein uS5 (Thermotoga maritima (strain ATCC 43589 / DSM 3109 / JCM 10099 / NBRC 100826 / MSB8)).